The chain runs to 517 residues: GMP synthase [glutamine-hydrolyzing] (517 aa).

The region spanning 11–202 (KIIVLDYGSQ…AFGVCGAQDN (192 aa)) is the Glutamine amidotransferase type-1 domain. Cysteine 88 functions as the Nucleophile in the catalytic mechanism. Active-site residues include histidine 176 and glutamate 178. A GMPS ATP-PPase domain is found at 203–392 (WTMNDFIDMQ…LGMPYELVWR (190 aa)). Residue 230–236 (SGGVDSS) coordinates ATP.

In terms of assembly, homodimer.

The catalysed reaction is XMP + L-glutamine + ATP + H2O = GMP + L-glutamate + AMP + diphosphate + 2 H(+). It functions in the pathway purine metabolism; GMP biosynthesis; GMP from XMP (L-Gln route): step 1/1. In terms of biological role, catalyzes the synthesis of GMP from XMP. This is GMP synthase [glutamine-hydrolyzing] from Latilactobacillus sakei subsp. sakei (strain 23K) (Lactobacillus sakei subsp. sakei).